Consider the following 360-residue polypeptide: uncharacterized protein (360 aa).

An ABC transporter domain is found at 4 to 235; it reads LSLQHIQKIY…PANMFVAGFI (232 aa). 37–44 contacts ATP; that stretch reads GPSGCGKS.

The protein belongs to the ABC transporter superfamily.

This is an uncharacterized protein from Escherichia coli O6:H1 (strain CFT073 / ATCC 700928 / UPEC).